The chain runs to 160 residues: S-ribosylhomocysteine lyase (160 aa).

Fe cation contacts are provided by His57, His61, and Cys127.

It belongs to the LuxS family. In terms of assembly, homodimer. Requires Fe cation as cofactor.

The enzyme catalyses S-(5-deoxy-D-ribos-5-yl)-L-homocysteine = (S)-4,5-dihydroxypentane-2,3-dione + L-homocysteine. In terms of biological role, involved in the synthesis of autoinducer 2 (AI-2) which is secreted by bacteria and is used to communicate both the cell density and the metabolic potential of the environment. The regulation of gene expression in response to changes in cell density is called quorum sensing. Catalyzes the transformation of S-ribosylhomocysteine (RHC) to homocysteine (HC) and 4,5-dihydroxy-2,3-pentadione (DPD). This chain is S-ribosylhomocysteine lyase, found in Streptococcus pyogenes serotype M2 (strain MGAS10270).